A 188-amino-acid polypeptide reads, in one-letter code: MAIREIIEVPDPRLKQVSVPVEKFDDELKTLVEDMFETMYDAPGIGLAAIQVGVPLRVLVIDLQPDDPDAEPVACDHDGHHHHHQPTKKEPRVFINPEILDPSEEYSVYQEGCLSVPEIYAEVERPATIRARWQDLDGKVHEEQMEGLMATCLQHEMDHLEGVLFIDHLSRLKRNMALKKLEKLRKAA.

Residues 70–90 (AEPVACDHDGHHHHHQPTKKE) are disordered. Fe cation contacts are provided by Cys-113 and His-155. Glu-156 is an active-site residue. A Fe cation-binding site is contributed by His-159.

The protein belongs to the polypeptide deformylase family. Requires Fe(2+) as cofactor.

The catalysed reaction is N-terminal N-formyl-L-methionyl-[peptide] + H2O = N-terminal L-methionyl-[peptide] + formate. Functionally, removes the formyl group from the N-terminal Met of newly synthesized proteins. Requires at least a dipeptide for an efficient rate of reaction. N-terminal L-methionine is a prerequisite for activity but the enzyme has broad specificity at other positions. The protein is Peptide deformylase of Novosphingobium aromaticivorans (strain ATCC 700278 / DSM 12444 / CCUG 56034 / CIP 105152 / NBRC 16084 / F199).